We begin with the raw amino-acid sequence, 200 residues long: ADP-ribosylation factor-like protein 4A (200 aa).

Gly2 carries the N-myristoyl glycine lipid modification. GTP-binding positions include 27-34, 75-79, and 134-137; these read GLDCAGKT, DVGGQ, and NKQD.

This sequence belongs to the small GTPase superfamily. Arf family. In terms of assembly, interacts with CYTH2. Interacts with KPNA2; the interaction is direct. Does not interact with ARL4A. Myristoylated. In terms of tissue distribution, expressed strongly in testis and liver. Expressed slightly in heart, spleen, lung and kidney.

Its subcellular location is the cell membrane. The protein localises to the cytoplasm. It is found in the nucleus. The protein resides in the nucleolus. In terms of biological role, small GTP-binding protein which cycles between an inactive GDP-bound and an active GTP-bound form, and the rate of cycling is regulated by guanine nucleotide exchange factors (GEF) and GTPase-activating proteins (GAP). GTP-binding protein that does not act as an allosteric activator of the cholera toxin catalytic subunit. Recruits CYTH1, CYTH2, CYTH3 and CYTH4 to the plasma membrane in GDP-bound form. The chain is ADP-ribosylation factor-like protein 4A (Arl4a) from Mus musculus (Mouse).